A 247-amino-acid chain; its full sequence is Coproheme decarboxylase (247 aa).

Residues arginine 129, 143–147, histidine 170, glutamine 183, and serine 221 contribute to the Fe-coproporphyrin III site; that span reads YPMDK. Tyrosine 143 is a catalytic residue.

It belongs to the ChdC family. Type 1 subfamily. The cofactor is Fe-coproporphyrin III.

It catalyses the reaction Fe-coproporphyrin III + 2 H2O2 + 2 H(+) = heme b + 2 CO2 + 4 H2O. The catalysed reaction is Fe-coproporphyrin III + H2O2 + H(+) = harderoheme III + CO2 + 2 H2O. The enzyme catalyses harderoheme III + H2O2 + H(+) = heme b + CO2 + 2 H2O. It participates in porphyrin-containing compound metabolism; protoheme biosynthesis. Its function is as follows. Involved in coproporphyrin-dependent heme b biosynthesis. Catalyzes the decarboxylation of Fe-coproporphyrin III (coproheme) to heme b (protoheme IX), the last step of the pathway. The reaction occurs in a stepwise manner with a three-propionate intermediate. The protein is Coproheme decarboxylase of Bacillus cytotoxicus (strain DSM 22905 / CIP 110041 / 391-98 / NVH 391-98).